The chain runs to 336 residues: E3 ubiquitin-protein ligase RING2 (336 aa).

N-acetylserine is present on serine 2. Positions 2-179 (SQAVQTNGTQ…AEDNGDSSHC (178 aa)) are interaction with HIP2. A Phosphoserine modification is found at serine 41. Residues 51-91 (CPICLDMLKNTMTTKECLHRFCADCIITALRSGNKECPTCR) form an RING-type zinc finger. The interaction with nucleosomes via an acidic patch on histone H2A and histone H2B stretch occupies residues 93 to 98 (KLVSKR). Residue lysine 112 forms a Glycyl lysine isopeptide (Lys-Gly) (interchain with G-Cter in ubiquitin) linkage. Phosphoserine occurs at positions 143 and 168. A disordered region spans residues 157–213 (QRGKKQQIENGSGAEDNGDSSHCSNASTHSNQEAGPSNKRTKTSDDSGLEPDNNNAA). Positions 176 to 191 (SSHCSNASTHSNQEAG) are enriched in polar residues. Residues lysine 249 and lysine 323 each participate in a glycyl lysine isopeptide (Lys-Gly) (interchain with G-Cter in SUMO2) cross-link.

As to quaternary structure, component of chromatin-associated Polycomb (PcG) complexes. Component of a number of PRC1-like complexes; these complexes contain either the polycomb group ring finger protein PCGF1, or PCGF2, or PCGF3, or BMI1, or PCGF5, or PCGF6. Distinct PRC1-like complexes are composed of a RING1 subunit (RING1B or RING1A), one of the six PCGF proteins (PCGF1, PCGF2, PCGF3, BMI1, PCGF5 or PCGF6), one PHC protein (PHC1, PHC2 or PHC3) and one of the CBX proteins (CBX2, CBX4, CBX6, CBX7 or CBX8). Part of a complex that contains RNF2, UB2D3 and BMI1; within that complex RNF2 and BMI1 form a tight heterodimer, where UB2D3 interacts only with RNF2. The complex composed of RNF2, UB2D3 and BMI1 binds nucleosomes, and has activity only with nucleosomal histone H2A. Part of a complex that contains PCGF5, RNF2 and UBE2D3. Part of a complex that contains AUTS2, PCGF5, RNF2, CSNK2B and RYBP. Interacts with CBX6 and CBX8. Interacts with PHC1, PCGF2, RYBP, CBX7, CBX4, CBX2, RNF1/RING1, BMI1 and PHC2. Interaction with RYBP and CBX7 is mutually exclusive; both compete for the same binding site on RNF2. Component of repressive BCOR complex containing a Polycomb group subcomplex at least composed of RYBP, PCGF1, BCOR and RING1. Interacts with CBX2 and PHC1. Interacts with CHTOP. Interacts with AURKB. Part of the E2F6.com-1 complex in G0 phase composed of E2F6, MGA, MAX, TFDP1, CBX3, BAT8, EUHMTASE1, RNF1/RING1, RNF2/RING2, MBLR, L3MBTL2 and YAF2. Component of some MLL1/MLL complex, at least composed of the core components KMT2A/MLL1, ASH2L, HCFC1/HCF1, WDR5 and RBBP5, as well as the facultative components BACC1, CHD8, E2F6, HSP70, INO80C, KANSL1, LAS1L, MAX, MCRS1, MGA, MYST1/MOF, PELP1, PHF20, PRP31, RING2, RUVB1/TIP49A, RUVB2/TIP49B, SENP3, TAF1, TAF4, TAF6, TAF7, TAF9 and TEX10. Interacts with RYBP, HIP2 and TFCP2. Interacts with NUPR1. Interacts with SAMD7 in a PHC2-dependent manner. In terms of processing, monoubiquitinated, by auto-ubiquitination. Polyubiquitinated in the presence of UBE2D3 (in vitro).

It is found in the nucleus. Its subcellular location is the cytoplasm. The protein localises to the chromosome. It carries out the reaction S-ubiquitinyl-[E2 ubiquitin-conjugating enzyme]-L-cysteine + [acceptor protein]-L-lysine = [E2 ubiquitin-conjugating enzyme]-L-cysteine + N(6)-ubiquitinyl-[acceptor protein]-L-lysine.. The protein operates within protein modification; protein ubiquitination. E3 ubiquitin-protein ligase that mediates monoubiquitination of 'Lys-119' of histone H2A (H2AK119Ub), thereby playing a central role in histone code and gene regulation. H2AK119Ub gives a specific tag for epigenetic transcriptional repression and participates in X chromosome inactivation of female mammals. May be involved in the initiation of both imprinted and random X inactivation. Essential component of a Polycomb group (PcG) multiprotein PRC1-like complex, a complex class required to maintain the transcriptionally repressive state of many genes, including Hox genes, throughout development. PcG PRC1 complex acts via chromatin remodeling and modification of histones, rendering chromatin heritably changed in its expressibility. E3 ubiquitin-protein ligase activity is enhanced by BMI1/PCGF4. Acts as the main E3 ubiquitin ligase on histone H2A of the PRC1 complex, while RING1 may rather act as a modulator of RNF2/RING2 activity. Plays a role in the transcriptional repression of genes that are required for pluripotency in embryonic stem cells, thereby contributing to differentiation of the ectodermal and endodermal germ layers. Association with the chromosomal DNA is cell-cycle dependent. In resting B- and T-lymphocytes, interaction with AURKB leads to block its activity, thereby maintaining transcription in resting lymphocytes. Also acts as a negative regulator of autophagy by mediating ubiquitination of AMBRA1, leading to its subsequent degradation. This Pongo abelii (Sumatran orangutan) protein is E3 ubiquitin-protein ligase RING2 (RNF2).